Here is a 573-residue protein sequence, read N- to C-terminus: MKLNIFKSHGDSNTAEERPVPLEQVEAEDQQHENRFWLGLTAKEFRLMMLAGVGFFLDSYDLFIINLVTPIFEYLYWGGIEKGPNGKGHYPSGIRGLVNAASNIGNIFGQLMFGFMGDFFGRKFVYGKEMIIVIIATILLIAMPKSIHSPLSKMMWVFCWRWLLGVGIGGDYPMSAAITSERSKLNRRGTLISLIFAFQGFGTLAGAIVTIILLGCFEHPLNREGHYRKLEGVWRLQFGLALVPAIGVLIPRLMMEETQKFKNSQQLNSGDNRDPKTSLNFEDDELVKNPSVTKGHPEIHESSENYLSRSNTVENEPENIEKQFESVSAPANRSGFIQYFRQWHHFKHLLGTSVCWFLLDIAFYGVNLNQSVILKNIGFSSGTNEYRTLMKNAIGNLIIAVAGYVPGYWFNVFLVEILGRKWIQLQGFVITGLMFAILAGRWNEISTGGRFACFVIAQLFSNFGPNSTTFIYPAEVFPARVRGTAHGISAALGKCGAILASLLFNFLTSIIGYGNVMWIFCGCMWGGILFTLLLPETKGRDADEIDRVELFYGGDGKVECNSKWKSWYVNGIF.

6 helical membrane-spanning segments follow: residues 48–68 (MMLA…INLV), 100–120 (AASN…GDFF), 124–144 (FVYG…IAMP), 154–174 (MMWV…DYPM), 194–214 (LIFA…IILL), and 230–250 (LEGV…GVLI). The span at 261–270 (FKNSQQLNSG) shows a compositional bias: polar residues. 2 disordered regions span residues 261 to 280 (FKNS…TSLN) and 290 to 312 (PSVT…RSNT). Helical transmembrane passes span 348–368 (HLLG…GVNL), 397–417 (LIIA…LVEI), 422–442 (WIQL…AGRW), 451–471 (FACF…TTFI), 487–507 (GISA…FNFL), and 510–530 (IIGY…GILF).

It belongs to the major facilitator superfamily. Sugar transporter (TC 2.A.1.1) family.

Its subcellular location is the endoplasmic reticulum membrane. Its function is as follows. High-affinity transporter for external inorganic phosphate. The polypeptide is Putative inorganic phosphate transporter C1683.01 (Schizosaccharomyces pombe (strain 972 / ATCC 24843) (Fission yeast)).